A 220-amino-acid chain; its full sequence is LHFPL tetraspan subfamily member 1 protein (220 aa).

The N-terminal stretch at 1–20 (MRNSLTMVGTFWAFLSLVTA) is a signal peptide. A run of 2 helical transmembrane segments spans residues 86–106 (VVTG…VLGC) and 122–142 (AAQF…PLGW). Residue Asn-153 is glycosylated (N-linked (GlcNAc...) asparagine). The chain crosses the membrane as a helical span at residues 165–185 (LGWAYYCAGGGAAAAMLICTW).

It belongs to the LHFP family. Widely expressed. Strongly expressed in vagina and ovary. Weakly expressed in spleen, kidney, thymus, testis, brain, lung, intestine and uterus.

The protein localises to the membrane. The chain is LHFPL tetraspan subfamily member 1 protein from Mus musculus (Mouse).